The chain runs to 95 residues: MALTKADLAENLFEKLGFSKRDAKDTVEVFFEEIRKALENGEQVKLSGFGNFDLRDKNERPGRNPKTGEDIPITARRVVTFRPGQKLKARVENLK.

Positions 51–71 are disordered; that stretch reads NFDLRDKNERPGRNPKTGEDI. Basic and acidic residues predominate over residues 53–69; sequence DLRDKNERPGRNPKTGE.

Belongs to the bacterial histone-like protein family. Heterodimer of an alpha and a beta chain.

Functionally, this protein is one of the two subunits of integration host factor, a specific DNA-binding protein that functions in genetic recombination as well as in transcriptional and translational control. This chain is Integration host factor subunit alpha, found in Vibrio vulnificus (strain CMCP6).